Here is a 254-residue protein sequence, read N- to C-terminus: Cell division protein FtsQ (254 aa).

The Cytoplasmic segment spans residues 1–27; the sequence is MNILKRKTPQNIRFGEQKPKYYFHIRA. Residues 28–48 traverse the membrane as a helical segment; sequence FAVLLGVFFLLGVYFNWQSIL. Residues 49 to 254 are Periplasmic-facing; it reads EKMDDKPISA…AGAAVGMVDR (206 aa). The region spanning 54-124 is the POTRA domain; the sequence is KPISAFALVG…NRLSIWVSEY (71 aa).

This sequence belongs to the FtsQ/DivIB family. FtsQ subfamily. In terms of assembly, part of a complex composed of FtsB, FtsL and FtsQ.

It is found in the cell inner membrane. Functionally, essential cell division protein. May link together the upstream cell division proteins, which are predominantly cytoplasmic, with the downstream cell division proteins, which are predominantly periplasmic. May control correct divisome assembly. This is Cell division protein FtsQ from Haemophilus influenzae (strain ATCC 51907 / DSM 11121 / KW20 / Rd).